The chain runs to 557 residues: Protein NRT1/ PTR FAMILY 5.10 (557 aa).

A run of 2 helical transmembrane segments spans residues 49-67 (FAYYGISSNLITYLTGPLG) and 79-99 (AWSGTASLLPLLGAFVADSFL). Thr-104 is modified (phosphothreonine). The next 10 helical transmembrane spans lie at 105–125 (ILAASALYIVGLGVLTLSAMI), 144–164 (VITFFSALYLVALAQGGHKPC), 186–206 (SFFNWWYFGMCFGTLTTLWVL), 215–235 (WALGFGIPCIAMVVALVVLLL), 320–340 (APIWLTCLVYAVVFAQSPTFF), 365–385 (FISLSIVIFIPIYDRVLIPIA), 401–421 (IGTGIFLSFLAMVVAALVEMK), 443–463 (VWWLVPQYVLFGITDVFAMVG), 479–499 (VGLALYLSIFGIGNFLSSFMI), and 526–546 (YFYWLLACLSFIGLASYLYVA).

The protein belongs to the major facilitator superfamily. Proton-dependent oligopeptide transporter (POT/PTR) (TC 2.A.17) family. As to expression, expressed in shoots, roots and stems. Detected in leaves, flowers and siliques.

The protein localises to the membrane. In Arabidopsis thaliana (Mouse-ear cress), this protein is Protein NRT1/ PTR FAMILY 5.10 (NPF5.10).